The primary structure comprises 254 residues: Nickel import ATP-binding protein NikD (254 aa).

The ABC transporter domain maps to 2-241 (PQQIELRNIA…PKHTVTRSLV (240 aa)). 36 to 43 (GGSGSGKS) is an ATP binding site.

This sequence belongs to the ABC transporter superfamily. Nickel importer (TC 3.A.1.5.3) family. In terms of assembly, the complex is composed of two ATP-binding proteins (NikD and NikE), two transmembrane proteins (NikB and NikC) and a solute-binding protein (NikA).

The protein localises to the cell inner membrane. The catalysed reaction is Ni(2+)(out) + ATP + H2O = Ni(2+)(in) + ADP + phosphate + H(+). Part of the ABC transporter complex NikABCDE involved in nickel import. Responsible for energy coupling to the transport system. In Escherichia coli (strain K12), this protein is Nickel import ATP-binding protein NikD.